A 454-amino-acid chain; its full sequence is Bleomycin hydrolase (454 aa).

Met-1 carries the post-translational modification N-acetylmethionine. Residues Cys-73 and His-372 contribute to the active site. Lys-391 is subject to N6-acetyllysine. The active site involves Asn-396.

This sequence belongs to the peptidase C1 family. In terms of assembly, homohexamer. Interacts with NUDT12 (via ANK repeats). Expressed at relatively higher levels in the stomach, esophagus, spleen, thymus and testis, and at lower levels in the skin, lung and skeletal muscle.

It localises to the cytoplasm. It is found in the cytoplasmic granule. The catalysed reaction is Inactivates bleomycin B2 (a cytotoxic glycometallopeptide) by hydrolysis of a carboxyamide bond of beta-aminoalanine, but also shows general aminopeptidase activity. The specificity varies somewhat with source, but amino acid arylamides of Met, Leu and Ala are preferred.. Its function is as follows. The normal physiological role of BLM hydrolase is unknown, but it catalyzes the inactivation of the antitumor drug BLM (a glycopeptide) by hydrolyzing the carboxamide bond of its B-aminoalaninamide moiety thus protecting normal and malignant cells from BLM toxicity. Binds single-stranded DNA with higher affinity than double-stranded DNA. May play an important role in the metabolism of antibiotics. The protein is Bleomycin hydrolase (Blmh) of Rattus norvegicus (Rat).